Reading from the N-terminus, the 526-residue chain is GMP synthase [glutamine-hydrolyzing] (526 aa).

The Glutamine amidotransferase type-1 domain maps to 4 to 204 (KIVVLDFGSQ…AHAICGCSGD (201 aa)). Cys87 serves as the catalytic Nucleophile. Active-site residues include His178 and Glu180. Residues 205–401 (WTPASFVEEQ…LDVPDPIVGR (197 aa)) enclose the GMPS ATP-PPase domain. Residue 232-238 (SGGVDSS) coordinates ATP.

Homodimer.

It carries out the reaction XMP + L-glutamine + ATP + H2O = GMP + L-glutamate + AMP + diphosphate + 2 H(+). It participates in purine metabolism; GMP biosynthesis; GMP from XMP (L-Gln route): step 1/1. Catalyzes the synthesis of GMP from XMP. In Salinibacter ruber (strain DSM 13855 / M31), this protein is GMP synthase [glutamine-hydrolyzing].